We begin with the raw amino-acid sequence, 457 residues long: Peptidyl-prolyl cis-trans isomerase FKBP5 (457 aa).

The residue at position 1 (M1) is an N-acetylmethionine. The span at 1-11 (MTTDEGAKSSR) shows a compositional bias: basic and acidic residues. Residues 1-28 (MTTDEGAKSSRENPAATVAEQGEDVTSK) form a disordered region. K28 carries the N6-acetyllysine modification. 2 PPIase FKBP-type domains span residues 50–138 (GDKV…LNFK) and 165–251 (GARV…KSFE). TPR repeat units lie at residues 268–301 (AAIVKEEGTVYFKGGKYVQAVIQYGKIVSWLEME), 317–350 (LAAFLNLAMCYLKLREYAKAVECCDKALGLDSAN), and 351–384 (EKGLYRRGEAQLLMNEFESAKGDFEKVLEVNPQN). Residues 424 to 457 (EANKAVSKKTSEGVTNEKLTVSHAVEEEKPEGHV) are disordered. S445 carries the phosphoserine modification. Over residues 447–457 (AVEEEKPEGHV) the composition is skewed to basic and acidic residues.

Part of a heteromultimeric cytoplasmic complex with HSP90AA1, HSPA1A/HSPA1B and steroid receptors. Upon ligand binding dissociates from the complex and FKBP4 takes its place. Interacts with functionally mature heterooligomeric progesterone receptor complexes along with HSP90 and TEBP. Interacts with NR3C1. Interacts with Akt/AKT1 and PHLPP1; enhancing dephosphorylation and subsequent activation of Akt/AKT1. Interacts with IFI44L; this interaction modulates the kinase activity of IKBKB and IKBKE. Interacts with IKBKB and IKBKE. In terms of processing, acetylation impairs ability to promote interaction between Akt/AKT1 and PHLPP1. Deacetylation by SIRT7 promotes interaction between Akt/AKT1 and PHLPP1, leading to suppress Akt/AKT1 activation. Post-translationally, ubiquitinated, leading to degradation in a proteasome-dependent manner. Deubiquitinated by USP49, leading to stabilization.

It is found in the cytoplasm. The protein localises to the nucleus. It catalyses the reaction [protein]-peptidylproline (omega=180) = [protein]-peptidylproline (omega=0). Its activity is regulated as follows. Inhibited by both FK506 and rapamycin. Immunophilin protein with PPIase and co-chaperone activities. Component of unligated steroid receptors heterocomplexes through interaction with heat-shock protein 90 (HSP90). Plays a role in the intracellular trafficking of heterooligomeric forms of steroid hormone receptors maintaining the complex into the cytoplasm when unliganded. Acts as a regulator of Akt/AKT1 activity by promoting the interaction between Akt/AKT1 and PHLPP1, thereby enhancing dephosphorylation and subsequent activation of Akt/AKT1. Interacts with IKBKE and IKBKB which facilitates IKK complex assembly leading to increased IKBKE and IKBKB kinase activity, NF-kappaB activation, and IFN production. This is Peptidyl-prolyl cis-trans isomerase FKBP5 (FKBP5) from Saguinus oedipus (Cotton-top tamarin).